The chain runs to 70 residues: ATP synthase subunit c (70 aa).

A run of 2 helical transmembrane segments spans residues I4–V24 and F47–V67.

This sequence belongs to the ATPase C chain family. In terms of assembly, F-type ATPases have 2 components, F(1) - the catalytic core - and F(0) - the membrane proton channel. F(1) has five subunits: alpha(3), beta(3), gamma(1), delta(1), epsilon(1). F(0) has three main subunits: a(1), b(2) and c(10-14). The alpha and beta chains form an alternating ring which encloses part of the gamma chain. F(1) is attached to F(0) by a central stalk formed by the gamma and epsilon chains, while a peripheral stalk is formed by the delta and b chains.

Its subcellular location is the cell membrane. Its function is as follows. F(1)F(0) ATP synthase produces ATP from ADP in the presence of a proton or sodium gradient. F-type ATPases consist of two structural domains, F(1) containing the extramembraneous catalytic core and F(0) containing the membrane proton channel, linked together by a central stalk and a peripheral stalk. During catalysis, ATP synthesis in the catalytic domain of F(1) is coupled via a rotary mechanism of the central stalk subunits to proton translocation. Key component of the F(0) channel; it plays a direct role in translocation across the membrane. A homomeric c-ring of between 10-14 subunits forms the central stalk rotor element with the F(1) delta and epsilon subunits. The sequence is that of ATP synthase subunit c from Pediococcus pentosaceus (strain ATCC 25745 / CCUG 21536 / LMG 10740 / 183-1w).